Reading from the N-terminus, the 131-residue chain is Large ribosomal subunit protein bL17 (131 aa).

Belongs to the bacterial ribosomal protein bL17 family. In terms of assembly, part of the 50S ribosomal subunit. Contacts protein L32.

The sequence is that of Large ribosomal subunit protein bL17 from Polynucleobacter necessarius subsp. necessarius (strain STIR1).